The primary structure comprises 188 residues: ATP synthase subunit delta (188 aa).

It belongs to the ATPase delta chain family. F-type ATPases have 2 components, F(1) - the catalytic core - and F(0) - the membrane proton channel. F(1) has five subunits: alpha(3), beta(3), gamma(1), delta(1), epsilon(1). F(0) has three main subunits: a(1), b(2) and c(10-14). The alpha and beta chains form an alternating ring which encloses part of the gamma chain. F(1) is attached to F(0) by a central stalk formed by the gamma and epsilon chains, while a peripheral stalk is formed by the delta and b chains.

It localises to the cell inner membrane. F(1)F(0) ATP synthase produces ATP from ADP in the presence of a proton or sodium gradient. F-type ATPases consist of two structural domains, F(1) containing the extramembraneous catalytic core and F(0) containing the membrane proton channel, linked together by a central stalk and a peripheral stalk. During catalysis, ATP synthesis in the catalytic domain of F(1) is coupled via a rotary mechanism of the central stalk subunits to proton translocation. Its function is as follows. This protein is part of the stalk that links CF(0) to CF(1). It either transmits conformational changes from CF(0) to CF(1) or is implicated in proton conduction. The polypeptide is ATP synthase subunit delta (Rhizobium etli (strain ATCC 51251 / DSM 11541 / JCM 21823 / NBRC 15573 / CFN 42)).